The sequence spans 199 residues: Recombination protein RecR (199 aa).

The C4-type zinc finger occupies 57-72 (CRQCRVLTEEPVCGLC). The Toprim domain occupies 80–175 (SLLCVVEGPA…RTTRIAHGVP (96 aa)).

This sequence belongs to the RecR family.

Functionally, may play a role in DNA repair. It seems to be involved in an RecBC-independent recombinational process of DNA repair. It may act with RecF and RecO. The chain is Recombination protein RecR from Alkalilimnicola ehrlichii (strain ATCC BAA-1101 / DSM 17681 / MLHE-1).